Reading from the N-terminus, the 240-residue chain is MRFIAFAVIFSAVYLCSSAFTHPRGEWTKLILTQHWPQTFCKMEHCKTDFSYWTLHGLWPNTGVRCNTSWHFNASLIEDILPEMEKFWPDLLEPSSPKFWNYEWTKHGTCAAKSESLNSEHKYFGKALELYHKFDLNSVLLKNQIVPSEKHYTLEDVEEAITSAYGVKPKIQCVHPGQGGQVQILGQIEICVDRDFQLMGCEKSSEDTWSNDLPTVPVSGQSGLSVCDHSMPVYYPPVQA.

The first 19 residues, 1–19 (MRFIAFAVIFSAVYLCSSA), serve as a signal peptide directing secretion. Residues Cys-41 and Cys-46 are joined by a disulfide bond. Residue His-56 is part of the active site. Intrachain disulfides connect Cys-66–Cys-110, Cys-173–Cys-227, and Cys-191–Cys-201. N-linked (GlcNAc...) asparagine glycosylation is found at Asn-67 and Asn-73. Residues Glu-103 and His-107 contribute to the active site.

The protein belongs to the RNase T2 family. As to expression, ubiquitous.

Its subcellular location is the lysosome lumen. It localises to the endoplasmic reticulum lumen. The protein localises to the secreted. It catalyses the reaction a ribonucleotidyl-ribonucleotide-RNA + H2O = a 3'-end 3'-phospho-ribonucleotide-RNA + a 5'-end dephospho-ribonucleoside-RNA + H(+). Has ribonuclease activity, with higher activity at acidic pH. Probably is involved in lysosomal degradation of ribosomal RNA. The polypeptide is Ribonuclease T2 (rnaset2) (Danio rerio (Zebrafish)).